Here is a 301-residue protein sequence, read N- to C-terminus: uncharacterized protein (301 aa).

This sequence belongs to the asfivirus E301R family. Interacts with host IRF3.

Its function is as follows. Plays a role in the inhibition of host innate immune system by acting as a negatively regulator of type I interferon production. Mechanistically, interacts with and prevents host IRF3 nuclear localization to inhibit its transcriptional activity. This is an uncharacterized protein from Ornithodoros (relapsing fever ticks).